A 2163-amino-acid chain; its full sequence is Myosin-VIIa (2163 aa).

Residues 58-728 form the Myosin motor domain; the sequence is QGVEDMISLG…HDLFLEQERD (671 aa). 151-158 lines the ATP pocket; that stretch reads GESGAGKT. Actin-binding stretches follow at residues 607–629 and 707–721; these read LDSL…KPNE and QLGH…AHDL. 4 consecutive IQ domains span residues 731–753, 754–783, 800–822, and 823–852; these read LTRK…RFLR, MRQA…GYMR, LRGH…EYGL, and KMWA…EYRR. Residues 886–914 adopt a coiled-coil conformation; the sequence is RLNEIERKEIEQELEERRRVEVKKNIIND. The disordered stretch occupies residues 937-958; sequence PDSSSEAPTPHGGRETSVFNDL. One can recognise a MyTH4 1 domain in the interval 1003–1239; that stretch reads YSRKPLKHPL…PSWLELQATK (237 aa). The FERM 1 domain occupies 1244-1554; sequence IMLPITFMDG…YFLEGLKKRS (311 aa). The region spanning 1552 to 1621 is the SH3 domain; it reads KRSKFVIALQ…PAEIVYVLPS (70 aa). The MyTH4 2 domain occupies 1697–1845; the sequence is YSREPLKQPL…PHQVEVEAIQ (149 aa). Positions 1851–2154 constitute an FERM 2 domain; the sequence is IFHKVYFPDD…SYISLMLTNM (304 aa).

It belongs to the TRAFAC class myosin-kinesin ATPase superfamily. Myosin family. Homodimerizes in a two headed molecule through the formation of a coiled-coil rod.

It is found in the cytoplasm. Its function is as follows. Myosins are actin-based motor molecules with ATPase activity. Unconventional myosins serve in intracellular movements: can function in cells as a single-molecule cargo transporter. A very slow and high-duty-ratio motor, may be suitable for tension maintenance of actin filaments. Their highly divergent tails are presumed to bind to membranous compartments, which would be moved relative to actin filaments. Plays a key role in the formation of cellular projections and other actin-based functions required for embryonic and larval viability. Necessary for auditory transduction: plays a role in Johnston organ (JO) organization by functioning in scolopidial apical attachment and therefore to acoustic stimulus propagation from the antenna a2/a3 joint to transducing elements. This Aedes aegypti (Yellowfever mosquito) protein is Myosin-VIIa.